The following is a 574-amino-acid chain: Acetolactate synthase isozyme 3 large subunit (574 aa).

E51 serves as a coordination point for thiamine diphosphate. FAD-binding positions include R153, 261-282, and 304-323; these read HGTY…VGVR and DIDP…IVGD. Positions 397–477 are thiamine pyrophosphate binding; sequence QHQMFAALYY…VLVVNLNNRY (81 aa). Positions 448 and 475 each coordinate Mg(2+).

It belongs to the TPP enzyme family. In terms of assembly, dimer of large and small chains. Mg(2+) serves as cofactor. The cofactor is thiamine diphosphate.

It carries out the reaction 2 pyruvate + H(+) = (2S)-2-acetolactate + CO2. The protein operates within amino-acid biosynthesis; L-isoleucine biosynthesis; L-isoleucine from 2-oxobutanoate: step 1/4. Its pathway is amino-acid biosynthesis; L-valine biosynthesis; L-valine from pyruvate: step 1/4. With respect to regulation, sensitive to valine inhibition. This Escherichia coli (strain K12) protein is Acetolactate synthase isozyme 3 large subunit (ilvI).